A 384-amino-acid polypeptide reads, in one-letter code: Probable L-aspartate decarboxylase (384 aa).

Lysine 233 bears the N6-(pyridoxal phosphate)lysine mark.

This sequence belongs to the group II decarboxylase family. MfnA subfamily. It depends on pyridoxal 5'-phosphate as a cofactor.

The catalysed reaction is L-aspartate + H(+) = beta-alanine + CO2. It participates in cofactor biosynthesis; coenzyme A biosynthesis. Catalyzes the decarboxylation of L-aspartate to produce beta-alanine. The protein is Probable L-aspartate decarboxylase of Pyrococcus abyssi (strain GE5 / Orsay).